The primary structure comprises 389 residues: Protein Wnt-10b (389 aa).

Positions 1–28 (MLEEPRPRPPPSGLAGLLFLALCSRALS) are cleaved as a signal peptide. A Phosphothreonine modification is found at Thr-46. 11 cysteine pairs are disulfide-bonded: Cys-83–Cys-94, Cys-136–Cys-144, Cys-146–Cys-199, Cys-247–Cys-261, Cys-249–Cys-256, Cys-318–Cys-349, Cys-334–Cys-344, Cys-348–Cys-388, Cys-364–Cys-379, Cys-366–Cys-376, and Cys-371–Cys-372. Asn-93 carries an N-linked (GlcNAc...) asparagine glycan. A disordered region spans residues 171–197 (KSFPHSLPSPGPGSSPSPGPQDTWEWG). Pro residues predominate over residues 177–189 (LPSPGPGSSPSPG). Residue Ser-253 is the site of O-palmitoleoyl serine; by PORCN attachment. A glycan (N-linked (GlcNAc...) asparagine) is linked at Asn-335.

It belongs to the Wnt family. As to quaternary structure, forms a soluble 1:1 complex with AFM; this prevents oligomerization and is required for prolonged biological activity. The complex with AFM may represent the physiological form in body fluids. In terms of processing, palmitoleoylation is required for efficient binding to frizzled receptors. Depalmitoleoylation leads to Wnt signaling pathway inhibition. As to expression, detected in most adult tissues. Highest levels were found in heart and skeletal muscle. Low levels are found in brain.

It localises to the secreted. It is found in the extracellular space. The protein resides in the extracellular matrix. Its function is as follows. Member of the Wnt ligand gene family that encodes for secreted proteins, which activate the Wnt signaling cascade. Specifically activates canonical Wnt/beta-catenin signaling and thus triggers beta-catenin/LEF/TCF-mediated transcriptional programs. Involved in signaling networks controlling stemness, pluripotency and cell fate decisions. Acts in the immune system, mammary gland, adipose tissue, bone and skin. The sequence is that of Protein Wnt-10b (WNT10B) from Homo sapiens (Human).